Reading from the N-terminus, the 259-residue chain is UPF0246 protein RD1_0358 (259 aa).

This sequence belongs to the UPF0246 family.

The polypeptide is UPF0246 protein RD1_0358 (Roseobacter denitrificans (strain ATCC 33942 / OCh 114) (Erythrobacter sp. (strain OCh 114))).